A 51-amino-acid polypeptide reads, in one-letter code: Large ribosomal subunit protein bL33 (51 aa).

It belongs to the bacterial ribosomal protein bL33 family.

The chain is Large ribosomal subunit protein bL33 from Nitrosococcus oceani (strain ATCC 19707 / BCRC 17464 / JCM 30415 / NCIMB 11848 / C-107).